Reading from the N-terminus, the 358-residue chain is Neutral protease 2 homolog MGYG_02351 (358 aa).

Positions 1–17 (MQFVALLAALGAPLALA) are cleaved as a signal peptide. Residues 18–183 (ASIPAAHNNS…DSPAGVIDKR (166 aa)) constitute a propeptide that is removed on maturation. Disulfide bonds link Cys-191–Cys-260 and Cys-267–Cys-285. Residue His-309 participates in Zn(2+) binding. Glu-310 is an active-site residue. Zn(2+)-binding residues include His-313 and Asp-324.

Belongs to the peptidase M35 family. Requires Zn(2+) as cofactor.

It localises to the secreted. It catalyses the reaction Preferential cleavage of bonds with hydrophobic residues in P1'. Also 3-Asn-|-Gln-4 and 8-Gly-|-Ser-9 bonds in insulin B chain.. Secreted metalloproteinase that allows assimilation of proteinaceous substrates. Shows high activities on basic nuclear substrates such as histone and protamine. May be involved in virulence. In Arthroderma gypseum (strain ATCC MYA-4604 / CBS 118893) (Microsporum gypseum), this protein is Neutral protease 2 homolog MGYG_02351.